The following is a 506-amino-acid chain: Maturase K (506 aa).

Belongs to the intron maturase 2 family. MatK subfamily.

It localises to the plastid. Its subcellular location is the chloroplast. In terms of biological role, usually encoded in the trnK tRNA gene intron. Probably assists in splicing its own and other chloroplast group II introns. This Wisteria frutescens (American wisteria) protein is Maturase K.